A 231-amino-acid polypeptide reads, in one-letter code: Ribonuclease 3 (231 aa).

The 130-residue stretch at 5–134 (QKKLKNDYGL…FLGALFIDQG (130 aa)) folds into the RNase III domain. E47 contacts Mg(2+). D51 is a catalytic residue. 2 residues coordinate Mg(2+): N120 and E123. E123 is a catalytic residue. Residues 160–229 (DYKTELQEVL…AENAIKGQNH (70 aa)) form the DRBM domain.

Belongs to the ribonuclease III family. As to quaternary structure, homodimer. Mg(2+) serves as cofactor.

The protein resides in the cytoplasm. The catalysed reaction is Endonucleolytic cleavage to 5'-phosphomonoester.. In terms of biological role, digests double-stranded RNA. Involved in the processing of primary rRNA transcript to yield the immediate precursors to the large and small rRNAs (23S and 16S). Processes some mRNAs, and tRNAs when they are encoded in the rRNA operon. Processes pre-crRNA and tracrRNA of type II CRISPR loci if present in the organism. The polypeptide is Ribonuclease 3 (Lactococcus lactis subsp. lactis (strain IL1403) (Streptococcus lactis)).